Here is a 104-residue protein sequence, read N- to C-terminus: UPF0145 protein NP_2600A (104 aa).

This sequence belongs to the UPF0145 family.

The sequence is that of UPF0145 protein NP_2600A from Natronomonas pharaonis (strain ATCC 35678 / DSM 2160 / CIP 103997 / JCM 8858 / NBRC 14720 / NCIMB 2260 / Gabara) (Halobacterium pharaonis).